The following is a 269-amino-acid chain: GTP cyclohydrolase FolE2 1 (269 aa).

The protein belongs to the GTP cyclohydrolase IV family.

The enzyme catalyses GTP + H2O = 7,8-dihydroneopterin 3'-triphosphate + formate + H(+). It functions in the pathway cofactor biosynthesis; 7,8-dihydroneopterin triphosphate biosynthesis; 7,8-dihydroneopterin triphosphate from GTP: step 1/1. Its function is as follows. Converts GTP to 7,8-dihydroneopterin triphosphate. This is GTP cyclohydrolase FolE2 1 from Burkholderia cenocepacia (strain HI2424).